The primary structure comprises 447 residues: Monocarboxylate transporter 11 (447 aa).

Over M1–G11 the chain is Cytoplasmic. The next 12 helical transmembrane spans lie at G12–L32, A54–L74, A80–F100, L107–L127, V139–A159, F162–H182, A219–V239, G249–A269, L288–V308, G330–V350, G354–L374, and A383–P403. The Cytoplasmic portion of the chain corresponds to R404–C447.

It belongs to the major facilitator superfamily. Monocarboxylate porter (TC 2.A.1.13) family. Interacts with isoform 2 of BSG.

It is found in the endoplasmic reticulum membrane. Its subcellular location is the cell membrane. The enzyme catalyses pyruvate(out) + H(+)(out) = pyruvate(in) + H(+)(in). Its function is as follows. Proton-linked monocarboxylate transporter. It catalyzes the transport of pyruvate across the plasma membrane. Probably involved in hepatic lipid metabolism: overexpression results in an increase of triacylglycerol(TAG) levels, small increases in intracellular diacylglycerols and decreases in lysophosphatidylcholine, cholesterol ester and sphingomyelin lipids. This is Monocarboxylate transporter 11 (Slc16a11) from Mus musculus (Mouse).